Here is a 203-residue protein sequence, read N- to C-terminus: 22.3 kDa class VI heat shock protein (203 aa).

Residues 86–203 (ALRRGARTTV…DAHQAAAATA (118 aa)) enclose the sHSP domain.

The protein belongs to the small heat shock protein (HSP20) family. In terms of assembly, may form oligomeric structures.

It is found in the cytoplasm. The polypeptide is 22.3 kDa class VI heat shock protein (HSP22.3) (Oryza sativa subsp. japonica (Rice)).